We begin with the raw amino-acid sequence, 136 residues long: Large ribosomal subunit protein uL16c (136 aa).

It belongs to the universal ribosomal protein uL16 family. Part of the 50S ribosomal subunit.

It localises to the plastid. The protein resides in the chloroplast. The sequence is that of Large ribosomal subunit protein uL16c from Buxus microphylla (Littleleaf boxwood).